Reading from the N-terminus, the 561-residue chain is Dihydroxy-acid dehydratase (561 aa).

Position 50 (cysteine 50) interacts with [2Fe-2S] cluster. Aspartate 82 serves as a coordination point for Mg(2+). [2Fe-2S] cluster is bound at residue cysteine 123. The Mg(2+) site is built by aspartate 124 and lysine 125. Lysine 125 is modified (N6-carboxylysine). Residue cysteine 195 participates in [2Fe-2S] cluster binding. Position 447 (glutamate 447) interacts with Mg(2+). Serine 473 acts as the Proton acceptor in catalysis.

Belongs to the IlvD/Edd family. Homodimer. The cofactor is [2Fe-2S] cluster. It depends on Mg(2+) as a cofactor.

The enzyme catalyses (2R)-2,3-dihydroxy-3-methylbutanoate = 3-methyl-2-oxobutanoate + H2O. The catalysed reaction is (2R,3R)-2,3-dihydroxy-3-methylpentanoate = (S)-3-methyl-2-oxopentanoate + H2O. It functions in the pathway amino-acid biosynthesis; L-isoleucine biosynthesis; L-isoleucine from 2-oxobutanoate: step 3/4. It participates in amino-acid biosynthesis; L-valine biosynthesis; L-valine from pyruvate: step 3/4. Its function is as follows. Functions in the biosynthesis of branched-chain amino acids. Catalyzes the dehydration of (2R,3R)-2,3-dihydroxy-3-methylpentanoate (2,3-dihydroxy-3-methylvalerate) into 2-oxo-3-methylpentanoate (2-oxo-3-methylvalerate) and of (2R)-2,3-dihydroxy-3-methylbutanoate (2,3-dihydroxyisovalerate) into 2-oxo-3-methylbutanoate (2-oxoisovalerate), the penultimate precursor to L-isoleucine and L-valine, respectively. The sequence is that of Dihydroxy-acid dehydratase from Acaryochloris marina (strain MBIC 11017).